The chain runs to 484 residues: MSLNNRWTVEQRYRRLEQIPQCDIEEMTLSRQQDKGFPSFHIAPKFGLLNDPNGLCYFNGEHHIFYQWTPVGPVHGMKYWYHLSTKDFIHFTDHGVGLHPDQDYDSHGVYSGGALVENNQVLLFFTGNKRDQNWNRIPTQCFATMDSDGSIEKHGVVIENEHYTEHFRDPKVWKKGDDYLMVVGAQTKTEHGSMALYQSKDLKTWQHKGPIKTKFSDLGYMWECPDFFEINGQSVMLFSPQGVSSSNPYDFKNIYSVAYIVGDQLNLESMTLENHQDILQPDYGFDFYAPQTYLDESGRRILIAWIGLPEIDTPSVTHQWAGMLSLPRELTLKDGFLVQTPLPELKSLRKEEVVFAQSHTLESTSCLIQLDLVGDGFELELSNLKGDNIVFSATEHEFMLDRRYMSHLYAEEFGGIRKAPRLDAKQTIDIYIDNSVIEIFINGGKHTMTSRFFIDDLNKVTLKGLEQARLFPLKGITGLFESAK.

Substrate is bound by residues 48–51 (LLND), Gln67, 110–111 (YS), 168–169 (RD), and Glu223. The active site involves Asp51.

It belongs to the glycosyl hydrolase 32 family.

The protein resides in the cytoplasm. It carries out the reaction Hydrolysis of terminal non-reducing beta-D-fructofuranoside residues in beta-D-fructofuranosides.. It functions in the pathway glycan biosynthesis; sucrose metabolism. In terms of biological role, enables the bacterium to metabolize sucrose as a sole carbon source. The sequence is that of Sucrose-6-phosphate hydrolase (scrB) from Vibrio alginolyticus.